The primary structure comprises 228 residues: Max-interacting protein 1 (228 aa).

Disordered stretches follow at residues 29-76 (GYAS…NELE) and 161-228 (IGST…SFTS). A compositionally biased stretch (basic residues) spans 43 to 56 (QHSKPPRRLSRAQK). The span at 57–70 (HSSGSSNTSTANRS) shows a compositional bias: polar residues. Residues 67–119 (ANRSTHNELEKNRRAHLRLCLERLKVLIPLGPDCTRHTTLGLLNKAKAHIKKL) form the bHLH domain. Acidic residues predominate over residues 173–183 (EREEIEVDVES). A compositionally biased stretch (polar residues) spans 216–228 (GYSSASVKLSFTS).

Interacts with SMC3. Efficient DNA binding requires dimerization with another bHLH protein. Binds DNA as a heterodimer with MAX. Interacts with RNF17. High levels found in the brain, heart and lung while lower levels are seen in the liver, kidney and skeletal muscle.

The protein resides in the nucleus. In terms of biological role, transcriptional repressor. MXI1 binds with MAX to form a sequence-specific DNA-binding protein complex which recognizes the core sequence 5'-CAC[GA]TG-3'. MXI1 thus antagonizes MYC transcriptional activity by competing for MAX. This is Max-interacting protein 1 (MXI1) from Homo sapiens (Human).